Consider the following 118-residue polypeptide: Phospholipase A2 'basic' (118 aa).

Intrachain disulfides connect cysteine 11-cysteine 70, cysteine 26-cysteine 117, cysteine 28-cysteine 44, cysteine 43-cysteine 98, cysteine 50-cysteine 91, cysteine 59-cysteine 84, and cysteine 77-cysteine 89. Residues tyrosine 27, glycine 29, and glycine 31 each coordinate Ca(2+). The active site involves histidine 47. Aspartate 48 provides a ligand contact to Ca(2+). Residues 52–69 carry the Coagulation factor Xa binding motif motif; sequence EKAGKMGCWPYLTLYKYK. Residue aspartate 92 is part of the active site.

Belongs to the phospholipase A2 family. Group I subfamily. D49 sub-subfamily. It depends on Ca(2+) as a cofactor. Expressed by the venom gland.

Its subcellular location is the secreted. It catalyses the reaction a 1,2-diacyl-sn-glycero-3-phosphocholine + H2O = a 1-acyl-sn-glycero-3-phosphocholine + a fatty acid + H(+). In terms of biological role, snake venom phospholipase A2 (PLA2) that shows strong anticoagulant activity. Binds directly with the coagulation factor FXa (F10) and blocks the formation of the prothombinase complex. Acts by a nonenzymatic mechanism. Also inhibits the complex composed of tissue factor (F3) and coagulation factor VIIa (F7) (TF-VIIa complex) by both enzymatic and nonenzymatic mechanisms. PLA2 catalyzes the calcium-dependent hydrolysis of the 2-acyl groups in 3-sn-phosphoglycerides. The polypeptide is Phospholipase A2 'basic' (Naja nigricollis (Black-necked spitting cobra)).